The following is a 908-amino-acid chain: Protein translocase subunit SecA (908 aa).

ATP is bound by residues Q87, 105 to 109, and D512; that span reads GEGKT. The disordered stretch occupies residues 882–908; sequence DGEKVGRNDPCPCGSGKKYKQCHGKLT. Zn(2+) contacts are provided by C892, C894, C903, and H904. A compositionally biased stretch (basic residues) spans 898–908; that stretch reads KKYKQCHGKLT.

Belongs to the SecA family. In terms of assembly, monomer and homodimer. Part of the essential Sec protein translocation apparatus which comprises SecA, SecYEG and auxiliary proteins SecDF-YajC and YidC. Zn(2+) is required as a cofactor.

It is found in the cell inner membrane. Its subcellular location is the cytoplasm. It catalyses the reaction ATP + H2O + cellular proteinSide 1 = ADP + phosphate + cellular proteinSide 2.. Its function is as follows. Part of the Sec protein translocase complex. Interacts with the SecYEG preprotein conducting channel. Has a central role in coupling the hydrolysis of ATP to the transfer of proteins into and across the cell membrane, serving both as a receptor for the preprotein-SecB complex and as an ATP-driven molecular motor driving the stepwise translocation of polypeptide chains across the membrane. The polypeptide is Protein translocase subunit SecA (Shewanella amazonensis (strain ATCC BAA-1098 / SB2B)).